The chain runs to 436 residues: AMSH-like protease (436 aa).

Met1 carries the N-acetylmethionine modification. Residues Ser25 and Ser242 each carry the phosphoserine modification. Residues 269-397 (VVLPEDLCHK…IFRLTNAGML (129 aa)) form the MPN domain. Residues His347, His349, Asp360, His362, Cys402, His408, and His410 each contribute to the Zn(2+) site. The JAMM motif motif lies at 347 to 360 (HTHPTQTAFLSSVD).

The protein belongs to the peptidase M67C family. Requires Zn(2+) as cofactor. Ubiquitously expressed.

Its activity is regulated as follows. Inhibited by UbV(SP.1), an ubiquitin variant that also inhibits STAMBP. In terms of biological role, zinc metalloprotease that specifically cleaves 'Lys-63'-linked polyubiquitin chains. Acts as a positive regulator of the TORC1 signaling pathway by mediating 'Lys-63'-linked deubiquitination of SESN2, thereby inhibiting SESN2-interaction with the GATOR2 complex. Does not cleave 'Lys-48'-linked polyubiquitin chains. This chain is AMSH-like protease, found in Homo sapiens (Human).